Reading from the N-terminus, the 191-residue chain is Cell division protein SepF (191 aa).

The interval 150 to 191 is disordered; it reads TSSSPEEASPSSVSPKNTPQYSVENNTAPEPAWGNSKLSAFS. Positions 151-164 are enriched in low complexity; it reads SSSPEEASPSSVSP. The span at 165–177 shows a compositional bias: polar residues; the sequence is KNTPQYSVENNTA.

It belongs to the SepF family. As to quaternary structure, homodimer. Interacts with FtsZ.

It is found in the cytoplasm. In terms of biological role, cell division protein that is part of the divisome complex and is recruited early to the Z-ring. Probably stimulates Z-ring formation, perhaps through the cross-linking of FtsZ protofilaments. Its function overlaps with FtsA. The sequence is that of Cell division protein SepF from Prochlorococcus marinus (strain MIT 9312).